Here is a 132-residue protein sequence, read N- to C-terminus: Small ribosomal subunit protein uS8c (132 aa).

Belongs to the universal ribosomal protein uS8 family. As to quaternary structure, part of the 30S ribosomal subunit.

The protein localises to the plastid. The protein resides in the chloroplast. Its function is as follows. One of the primary rRNA binding proteins, it binds directly to 16S rRNA central domain where it helps coordinate assembly of the platform of the 30S subunit. The sequence is that of Small ribosomal subunit protein uS8c (rps8) from Platanus occidentalis (Sycamore).